Reading from the N-terminus, the 234-residue chain is Accessory gland protein Acp29AB (234 aa).

Positions Met1 to Gly21 are cleaved as a signal peptide. Residues Asn61 and Asn164 are each glycosylated (N-linked (GlcNAc...) asparagine). In terms of domain architecture, C-type lectin spans Val137–Ala234. Cystine bridges form between Cys139-Cys228 and Cys207-Cys220.

Main cells of the accessory gland and in seminal fluid.

The protein localises to the secreted. Responsible for physiological and behavioral changes in mated female flies. In Drosophila melanogaster (Fruit fly), this protein is Accessory gland protein Acp29AB (Acp29AB).